A 229-amino-acid polypeptide reads, in one-letter code: Sodium channel modifier 1 (229 aa).

Residue Ser2 is modified to Phosphoserine. Residues 4-20 carry the Bipartite nuclear localization signal motif; the sequence is KREGDDWSQLNVLKKRR. Residues 42-74 form a Matrin-type zinc finger; it reads FACAICPHRPVLDTLAMLTAHRAGKKHLSSLKL. Lys67 is covalently cross-linked (Glycyl lysine isopeptide (Lys-Gly) (interchain with G-Cter in SUMO2)). 2 disordered regions span residues 80–105 and 128–187; these read QTGKGTEQNPRQQNELKTESKTEAPL and RRKH…TKRR. A compositionally biased stretch (polar residues) spans 82 to 92; sequence GKGTEQNPRQQ. Basic and acidic residues predominate over residues 157 to 171; it reads ISKEPEPRERSDAKE. 2 positions are modified to phosphoserine: Ser182 and Ser218. Residues 187–229 are required for interaction with LUC7L2; that stretch reads RVLNHYLTLRSSGWVPDGRGRWIKDENVEFDSDEEEPPDLPLD.

In terms of assembly, component of the minor spliceosome. Within this complex, interacts with RNF113A, as well as with SF3B1/SF3b155, SF3B2/SF3b145, SF3B3/SF3b130 and CDC5L. May interact with LUC7L2 and SNRNP70.

It localises to the nucleus. Its subcellular location is the nucleoplasm. It is found in the nucleus speckle. In terms of biological role, as a component of the minor spliceosome, involved in the splicing of U12-type introns in pre-mRNAs. Plays a role in the regulation of primary cilia length and Hedgehog signaling. This chain is Sodium channel modifier 1 (Scnm1), found in Mus musculus (Mouse).